Here is a 174-residue protein sequence, read N- to C-terminus: Probable calcium-binding protein CML20 (174 aa).

Gly2 carries the N-myristoyl glycine lipid modification. The tract at residues 14–35 (LRRSRSRSPPPAVLDPSQSPLS) is disordered. EF-hand domains lie at 39 to 74 (EAEP…SVDE), 75 to 100 (AEEM…AVME), 102 to 137 (GGLD…LNLD), and 141 to 174 (LTAE…SKQA). Residues Asp52, Asp54, Asp56, Glu63, Asp83, Asp85, Asp87, Glu94, Asp115, Asp117, Asn119, Glu126, Asp154, Asp156, Asp158, and Glu165 each contribute to the Ca(2+) site.

In terms of biological role, potential calcium sensor. The polypeptide is Probable calcium-binding protein CML20 (CML20) (Oryza sativa subsp. japonica (Rice)).